Consider the following 460-residue polypeptide: Ribosomal protein uS12 methylthiotransferase RimO (460 aa).

Residues 16–130 (NKIHFISLGC…ILSAIESKES (115 aa)) form the MTTase N-terminal domain. The [4Fe-4S] cluster site is built by C25, C61, C93, C164, C168, and C171. The 233-residue stretch at 150 to 382 (STPKHYAYLK…SQTQKKNVEK (233 aa)) folds into the Radical SAM core domain. The 71-residue stretch at 385–455 (KQFVGKIVEA…GYDLVGRVVN (71 aa)) folds into the TRAM domain.

The protein belongs to the methylthiotransferase family. RimO subfamily. The cofactor is [4Fe-4S] cluster.

It localises to the cytoplasm. The catalysed reaction is L-aspartate(89)-[ribosomal protein uS12]-hydrogen + (sulfur carrier)-SH + AH2 + 2 S-adenosyl-L-methionine = 3-methylsulfanyl-L-aspartate(89)-[ribosomal protein uS12]-hydrogen + (sulfur carrier)-H + 5'-deoxyadenosine + L-methionine + A + S-adenosyl-L-homocysteine + 2 H(+). Functionally, catalyzes the methylthiolation of an aspartic acid residue of ribosomal protein uS12. The sequence is that of Ribosomal protein uS12 methylthiotransferase RimO from Chlamydia abortus (strain DSM 27085 / S26/3) (Chlamydophila abortus).